Consider the following 546-residue polypeptide: Chaperonin GroEL (546 aa).

ATP is bound by residues 30–33 (TLGP), K51, 87–91 (DGTTT), G415, 479–481 (NAA), and D495.

Belongs to the chaperonin (HSP60) family. Forms a cylinder of 14 subunits composed of two heptameric rings stacked back-to-back. Interacts with the co-chaperonin GroES.

It is found in the cytoplasm. It carries out the reaction ATP + H2O + a folded polypeptide = ADP + phosphate + an unfolded polypeptide.. Functionally, together with its co-chaperonin GroES, plays an essential role in assisting protein folding. The GroEL-GroES system forms a nano-cage that allows encapsulation of the non-native substrate proteins and provides a physical environment optimized to promote and accelerate protein folding. The polypeptide is Chaperonin GroEL (Xanthomonas campestris pv. phaseoli).